Reading from the N-terminus, the 283-residue chain is Pantothenate synthetase (283 aa).

30–37 (MGNLHAGH) lines the ATP pocket. Catalysis depends on His37, which acts as the Proton donor. Gln61 lines the (R)-pantoate pocket. Beta-alanine is bound at residue Gln61. Residue 149–152 (GRKD) coordinates ATP. Position 155 (Gln155) interacts with (R)-pantoate. 186 to 189 (LSSR) provides a ligand contact to ATP.

It belongs to the pantothenate synthetase family. In terms of assembly, homodimer.

It is found in the cytoplasm. The enzyme catalyses (R)-pantoate + beta-alanine + ATP = (R)-pantothenate + AMP + diphosphate + H(+). The protein operates within cofactor biosynthesis; (R)-pantothenate biosynthesis; (R)-pantothenate from (R)-pantoate and beta-alanine: step 1/1. Catalyzes the condensation of pantoate with beta-alanine in an ATP-dependent reaction via a pantoyl-adenylate intermediate. In Chromohalobacter salexigens (strain ATCC BAA-138 / DSM 3043 / CIP 106854 / NCIMB 13768 / 1H11), this protein is Pantothenate synthetase.